The primary structure comprises 448 residues: Putative flavin-containing monooxygenase FMO GS-OX-like 10 (448 aa).

18 to 23 (GAGAAG) provides a ligand contact to FAD. Residue 212 to 217 (GSSVSG) coordinates NADP(+).

Belongs to the FMO family. Requires FAD as cofactor.

Its function is as follows. Catalyzes the conversion of methylthioalkyl glucosinolates of any chain length into methylsulfinylalkyl glucosinolates. The sequence is that of Putative flavin-containing monooxygenase FMO GS-OX-like 10 from Arabidopsis thaliana (Mouse-ear cress).